The primary structure comprises 296 residues: Probable porphobilinogen deaminase (296 aa).

Cys241 carries the S-(dipyrrolylmethanemethyl)cysteine modification.

The protein belongs to the HMBS family. Dipyrromethane serves as cofactor.

It catalyses the reaction 4 porphobilinogen + H2O = hydroxymethylbilane + 4 NH4(+). It functions in the pathway porphyrin-containing compound metabolism; protoporphyrin-IX biosynthesis; coproporphyrinogen-III from 5-aminolevulinate: step 2/4. Its function is as follows. Tetrapolymerization of the monopyrrole PBG into the hydroxymethylbilane pre-uroporphyrinogen in several discrete steps. The protein is Probable porphobilinogen deaminase of Pyrobaculum neutrophilum (strain DSM 2338 / JCM 9278 / NBRC 100436 / V24Sta) (Thermoproteus neutrophilus).